The sequence spans 120 residues: Ribonuclease P protein component 2 (120 aa).

This sequence belongs to the eukaryotic/archaeal RNase P protein component 2 family. As to quaternary structure, consists of a catalytic RNA component and at least 4-5 protein subunits. Forms a subcomplex with Rnp3 which stimulates the catalytic RNA.

It is found in the cytoplasm. It catalyses the reaction Endonucleolytic cleavage of RNA, removing 5'-extranucleotides from tRNA precursor.. In terms of biological role, part of ribonuclease P, a protein complex that generates mature tRNA molecules by cleaving their 5'-ends. The RNA is catalytic, but its KM for pre-tRNA is 170-fold decreased in the presence of the 4 known protein subunits (Rnp1-4). The protein subunits also decrease the amount of Mg(2+) needed for activity. This chain is Ribonuclease P protein component 2, found in Pyrococcus furiosus (strain ATCC 43587 / DSM 3638 / JCM 8422 / Vc1).